Consider the following 205-residue polypeptide: Thiamine-phosphate synthase (205 aa).

4-amino-2-methyl-5-(diphosphooxymethyl)pyrimidine contacts are provided by residues 37-41 (QVREK) and N69. Residues D70 and D89 each coordinate Mg(2+). S108 is a 4-amino-2-methyl-5-(diphosphooxymethyl)pyrimidine binding site. 134 to 136 (TGS) provides a ligand contact to 2-[(2R,5Z)-2-carboxy-4-methylthiazol-5(2H)-ylidene]ethyl phosphate. K137 serves as a coordination point for 4-amino-2-methyl-5-(diphosphooxymethyl)pyrimidine. 2-[(2R,5Z)-2-carboxy-4-methylthiazol-5(2H)-ylidene]ethyl phosphate is bound by residues G165 and 185-186 (IS).

It belongs to the thiamine-phosphate synthase family. Mg(2+) is required as a cofactor.

The enzyme catalyses 2-[(2R,5Z)-2-carboxy-4-methylthiazol-5(2H)-ylidene]ethyl phosphate + 4-amino-2-methyl-5-(diphosphooxymethyl)pyrimidine + 2 H(+) = thiamine phosphate + CO2 + diphosphate. The catalysed reaction is 2-(2-carboxy-4-methylthiazol-5-yl)ethyl phosphate + 4-amino-2-methyl-5-(diphosphooxymethyl)pyrimidine + 2 H(+) = thiamine phosphate + CO2 + diphosphate. It carries out the reaction 4-methyl-5-(2-phosphooxyethyl)-thiazole + 4-amino-2-methyl-5-(diphosphooxymethyl)pyrimidine + H(+) = thiamine phosphate + diphosphate. It participates in cofactor biosynthesis; thiamine diphosphate biosynthesis; thiamine phosphate from 4-amino-2-methyl-5-diphosphomethylpyrimidine and 4-methyl-5-(2-phosphoethyl)-thiazole: step 1/1. In terms of biological role, condenses 4-methyl-5-(beta-hydroxyethyl)thiazole monophosphate (THZ-P) and 2-methyl-4-amino-5-hydroxymethyl pyrimidine pyrophosphate (HMP-PP) to form thiamine monophosphate (TMP). The chain is Thiamine-phosphate synthase from Clostridium botulinum (strain Loch Maree / Type A3).